Here is a 20-residue protein sequence, read N- to C-terminus: Apidaecin 1+ (20 aa).

The interval 1 to 20 is disordered; the sequence is GKPNRPRPAPIQPRPPHPRL.

It belongs to the apidaecin family.

Its subcellular location is the secreted. Its function is as follows. Antimicrobial peptide active against many Gram-negative enterobacterial and plant-associated bacterial species. Not active against other bacterial species like H.pylori, P.mirabilis, B.pertussis or N.gonorrhoeae. Functionally, among others, also active against C.jejuni and L.pneumophila but not against Y.enterocolitica. Among others, also active against Y.enterocolitica butnot against L.pneumophila and C.jejuni. In Pimpla disparis (Parasitic wasp), this protein is Apidaecin 1+.